A 390-amino-acid polypeptide reads, in one-letter code: Malonyl-CoA-acyl carrier protein transacylase, mitochondrial (390 aa).

The N-terminal 21 residues, 1-21 (MSVRVARVAWVRGLGASYRRG), are a transit peptide targeting the mitochondrion. Residues serine 153 and histidine 270 contribute to the active site. N6-succinyllysine is present on lysine 314.

Belongs to the type II malonyltransferase family.

It localises to the mitochondrion. The catalysed reaction is holo-[ACP] + malonyl-CoA = malonyl-[ACP] + CoA. The protein operates within lipid metabolism; fatty acid biosynthesis. Functionally, catalyzes the transfer of a malonyl moiety from malonyl-CoA to the free thiol group of the phosphopantetheine arm of the mitochondrial ACP protein (NDUFAB1). This suggests the existence of the biosynthesis of fatty acids in mitochondria. Also acts as a mitochondrial small ribosomal subunit (mt-SSU) assembly factor. This is Malonyl-CoA-acyl carrier protein transacylase, mitochondrial from Homo sapiens (Human).